We begin with the raw amino-acid sequence, 144 residues long: Large ribosomal subunit protein uL16 (144 aa).

Belongs to the universal ribosomal protein uL16 family. Part of the 50S ribosomal subunit.

Functionally, binds 23S rRNA and is also seen to make contacts with the A and possibly P site tRNAs. In Lactiplantibacillus plantarum (strain ATCC BAA-793 / NCIMB 8826 / WCFS1) (Lactobacillus plantarum), this protein is Large ribosomal subunit protein uL16.